Consider the following 946-residue polypeptide: Protein RRC1 (946 aa).

Disordered stretches follow at residues 1–29 (MSSF…KAED) and 41–183 (SFQG…NLYV). Composition is skewed to basic and acidic residues over residues 15–29 (KHRE…KAED), 62–75 (DKPK…KSKD), and 98–147 (KGKE…DRQG). One can recognise an RRM domain in the interval 179 to 260 (TNLYVGNLSP…YELKIGWGKA (82 aa)). One copy of the SURP motif repeat lies at 329 to 372 (VIDTLALYVLDGECAFEQAIMERGRGNPLFKFMFELGSKEHTYY). In terms of domain architecture, CID spans 437–582 (LTDPQRDEFE…GLRSTFLRSG (146 aa)). An SAP domain is found at 631-665 (LMNLPIAELERRCRHNGLSLVGGRVMMVTRLLSLE). Disordered stretches follow at residues 740 to 797 (ASKW…EQRQ) and 836 to 946 (EVDY…RGTR). Polar residues predominate over residues 757 to 767 (SSSSGSDNTGG). Composition is skewed to basic and acidic residues over residues 772 to 781 (ADGEDLKGND), 854 to 868 (IIER…QESS), and 886 to 946 (STRE…RGTR).

In terms of assembly, component of the SWAP1-SFPS-RRC1 splicing factor complex which modulates pre-mRNA splicing to promote photomorphogenesis. Interacts with SWAP1 in a light-independent manner. Expressed in leaves, inflorescence stems, roots, flower buds, open flowers and siliques.

The protein localises to the nucleus speckle. Functionally, as a member of the SWAP1-SFPS-RRC1 splicing factor complex, modulates photomorphogenesis by regulating the gene expression and pre-messenger RNA (mRNA) alternative splicing of a large number of genes, including those involved in plant responses to light signaling. SR-like splicing factor required for phytochrome B (phyB) signal transduction and involved in phyB-dependent alternative splicing. The protein is Protein RRC1 of Arabidopsis thaliana (Mouse-ear cress).